The chain runs to 589 residues: Monocopper oxidase-like protein SKS1 (589 aa).

Positions 1-24 (MAATCSLLASFLLCFALLSAVSFA) are cleaved as a signal peptide. Asn62, Asn111, Asn204, Asn243, Asn260, Asn296, Asn345, Asn365, Asn433, and Asn447 each carry an N-linked (GlcNAc...) asparagine glycan. Positions 322–356 (LPVPKTDVSSPWSAMSQPKTIRQNTSASGARPNPQ) are disordered. Residues 328–349 (DVSSPWSAMSQPKTIRQNTSAS) are compositionally biased toward polar residues. His455 contributes to the Cu cation binding site. Residue Ser563 is the site of GPI-anchor amidated serine attachment. Positions 564–589 (AATSILNGHLKLMLLMVLLASVFRFC) are cleaved as a propeptide — removed in mature form.

It belongs to the multicopper oxidase family. Requires Cu cation as cofactor.

The protein localises to the cell membrane. This chain is Monocopper oxidase-like protein SKS1 (SKS1), found in Arabidopsis thaliana (Mouse-ear cress).